A 123-amino-acid chain; its full sequence is Periplasmic [Fe] hydrogenase small subunit (123 aa).

A signal peptide (tat-type signal) is located at residues 1-34 (MQIASITRRGFLKVACVTTGAALIGIRMTGKAVA). The disordered stretch occupies residues 103–123 (TTAGKLPNPRASEFEGPYPYE).

In terms of assembly, heterodimer of a large and a small subunit. Predicted to be exported by the Tat system. The position of the signal peptide cleavage has been experimentally proven.

The protein resides in the periplasm. It catalyses the reaction H2 + 2 oxidized [2Fe-2S]-[ferredoxin] = 2 reduced [2Fe-2S]-[ferredoxin] + 2 H(+). Functionally, may be involved in hydrogen uptake for the reduction of sulfate to hydrogen sulfide in an electron transport chain. Cytochrome c3 is likely to be the physiological electron carrier for the enzyme. The chain is Periplasmic [Fe] hydrogenase small subunit (hydB) from Nitratidesulfovibrio vulgaris (strain ATCC 29579 / DSM 644 / CCUG 34227 / NCIMB 8303 / VKM B-1760 / Hildenborough) (Desulfovibrio vulgaris).